Consider the following 351-residue polypeptide: Tryptophan--tRNA ligase (351 aa).

Residues Arg-11–Thr-13 and Gly-19–His-20 each bind ATP. The 'HIGH' region motif lies at Pro-12–His-20. Asp-139 provides a ligand contact to L-tryptophan. ATP is bound by residues Gly-151–Asp-153, Leu-190, and Lys-198–Ser-202. The short motif at Lys-198 to Ser-202 is the 'KMSKS' region element.

Belongs to the class-I aminoacyl-tRNA synthetase family. In terms of assembly, homodimer.

It is found in the cytoplasm. The catalysed reaction is tRNA(Trp) + L-tryptophan + ATP = L-tryptophyl-tRNA(Trp) + AMP + diphosphate + H(+). Catalyzes the attachment of tryptophan to tRNA(Trp). The chain is Tryptophan--tRNA ligase from Borreliella burgdorferi (strain ATCC 35210 / DSM 4680 / CIP 102532 / B31) (Borrelia burgdorferi).